A 203-amino-acid polypeptide reads, in one-letter code: MQILLATVAAYLIGSVSFAVVVSAAMGLADPRSYGSKNPGATNVLRSGNKKAAILTLVGDAFKGWLAVWLVKRFGIGGEIGVALAAIAVFLGHLYPVFFRFQGGKGVATAAGVLLAVHPVLGLATALTWLIVAFFFRYSSLAALVAAVFAPIFDVFLFGTRDNPVAWAVLAMSVLLIWRHRSNISKLLAGEESRIGQKKKTGA.

The next 6 membrane-spanning stretches (helical) occupy residues 3-23 (ILLATVAAYLIGSVSFAVVVS), 51-71 (KAAILTLVGDAFKGWLAVWLV), 74-94 (FGIGGEIGVALAAIAVFLGHL), 116-136 (AVHPVLGLATALTWLIVAFFF), 140-160 (SLAALVAAVFAPIFDVFLFGT), and 164-178 (PVAWAVLAMSVLLIW).

Belongs to the PlsY family. In terms of assembly, probably interacts with PlsX.

The protein resides in the cell inner membrane. The catalysed reaction is an acyl phosphate + sn-glycerol 3-phosphate = a 1-acyl-sn-glycero-3-phosphate + phosphate. The protein operates within lipid metabolism; phospholipid metabolism. Its function is as follows. Catalyzes the transfer of an acyl group from acyl-phosphate (acyl-PO(4)) to glycerol-3-phosphate (G3P) to form lysophosphatidic acid (LPA). This enzyme utilizes acyl-phosphate as fatty acyl donor, but not acyl-CoA or acyl-ACP. The protein is Glycerol-3-phosphate acyltransferase of Burkholderia pseudomallei (strain K96243).